The primary structure comprises 95 residues: Small ribosomal subunit protein uS19 (95 aa).

It belongs to the universal ribosomal protein uS19 family.

Protein S19 forms a complex with S13 that binds strongly to the 16S ribosomal RNA. This Bdellovibrio bacteriovorus (strain ATCC 15356 / DSM 50701 / NCIMB 9529 / HD100) protein is Small ribosomal subunit protein uS19.